The following is a 408-amino-acid chain: Solute carrier family 35 member F1 (408 aa).

Positions 1-21 (MIPPEQPQQQLQPPSPAPPNH) are disordered. The next 10 helical transmembrane spans lie at 60 to 80 (MLIS…IGLT), 94 to 114 (VFQS…TLAV), 129 to 147 (WWKY…YLVV), 158 to 178 (IQLL…FFLL), 186 to 206 (FIGI…DVLV), 221 to 241 (LLVL…EYII), 247 to 267 (VEFL…QLAI), 284 to 304 (LLYV…PVVI), 311 to 331 (SVNL…LFLF), and 335 to 355 (FSGL…LYSS).

The protein belongs to the SLC35F solute transporter family.

Its subcellular location is the cytoplasmic vesicle. It localises to the secretory vesicle. The protein resides in the synaptic vesicle membrane. In terms of biological role, putative solute transporter. The chain is Solute carrier family 35 member F1 (SLC35F1) from Homo sapiens (Human).